We begin with the raw amino-acid sequence, 52 residues long: MRIKVGLKCEECGDINYSTYKNSKNTTEKLELKKYCPRLKKHTLHKEVKLKS.

This sequence belongs to the bacterial ribosomal protein bL33 family.

The polypeptide is Large ribosomal subunit protein bL33 (Campylobacter jejuni subsp. jejuni serotype O:6 (strain 81116 / NCTC 11828)).